A 269-amino-acid polypeptide reads, in one-letter code: MKSFCKLEYDQVFGKENNSFSFLNHSSLYSHQSELANPFFELEDEMLPSATSSNCFTSASSFLALPDLEPISIVSHEADILSVYGSASWTAEETMFVSDFAKKSETTTTKKRRCREECFSSCSVSKTLSKETISLYFYMPITQAARELNIGLTLLKKRCRELGIKRWPHRKLMSLQKLISNVKELEKMEGEENEDKLRNALEKLEKEKKTIEKLPDLKFEDKTKRLRQACFKANHKRKRRSGMSTPITSSSSSASASSSSYSSVSGFER.

One can recognise an RWP-RK domain in the interval 106–195 (TTTTKKRRCR…EKMEGEENED (90 aa)). The stretch at 175 to 216 (LQKLISNVKELEKMEGEENEDKLRNALEKLEKEKKTIEKLPD) forms a coiled coil. The tract at residues 230-269 (CFKANHKRKRRSGMSTPITSSSSSASASSSSYSSVSGFER) is disordered. Positions 249 to 269 (SSSSSASASSSSYSSVSGFER) are enriched in low complexity.

The protein localises to the nucleus. Its function is as follows. Putative transcription factor. The chain is Protein RKD1 (RKD1) from Arabidopsis thaliana (Mouse-ear cress).